We begin with the raw amino-acid sequence, 416 residues long: UDP-N-acetylglucosamine 1-carboxyvinyltransferase (416 aa).

22–23 contacts phosphoenolpyruvate; that stretch reads KN. A UDP-N-acetyl-alpha-D-glucosamine-binding site is contributed by Arg-92. Cys-116 acts as the Proton donor in catalysis. Residue Cys-116 is modified to 2-(S-cysteinyl)pyruvic acid O-phosphothioketal. UDP-N-acetyl-alpha-D-glucosamine contacts are provided by residues 121–125, Asp-304, and Ile-326; that span reads RPVDQ.

The protein belongs to the EPSP synthase family. MurA subfamily.

The protein resides in the cytoplasm. It carries out the reaction phosphoenolpyruvate + UDP-N-acetyl-alpha-D-glucosamine = UDP-N-acetyl-3-O-(1-carboxyvinyl)-alpha-D-glucosamine + phosphate. It participates in cell wall biogenesis; peptidoglycan biosynthesis. In terms of biological role, cell wall formation. Adds enolpyruvyl to UDP-N-acetylglucosamine. The chain is UDP-N-acetylglucosamine 1-carboxyvinyltransferase from Cupriavidus taiwanensis (strain DSM 17343 / BCRC 17206 / CCUG 44338 / CIP 107171 / LMG 19424 / R1) (Ralstonia taiwanensis (strain LMG 19424)).